The chain runs to 126 residues: SOSS complex subunit C homolog (126 aa).

The interval 106-126 (LEPLPSPATTPTAPPSHSISK) is disordered. The span at 107–119 (EPLPSPATTPTAP) shows a compositional bias: pro residues.

This sequence belongs to the SOSS-C family.

The sequence is that of SOSS complex subunit C homolog from Drosophila sechellia (Fruit fly).